The chain runs to 462 residues: Histidine--tRNA ligase (462 aa).

It belongs to the class-II aminoacyl-tRNA synthetase family. In terms of assembly, homodimer.

The protein resides in the cytoplasm. The catalysed reaction is tRNA(His) + L-histidine + ATP = L-histidyl-tRNA(His) + AMP + diphosphate + H(+). The protein is Histidine--tRNA ligase (hisS) of Nostoc sp. (strain PCC 7120 / SAG 25.82 / UTEX 2576).